Here is a 194-residue protein sequence, read N- to C-terminus: CASP-like protein 4C1 (194 aa).

The Cytoplasmic portion of the chain corresponds to 1 to 35; it reads MRSPHAFRNGESPTLRDHTHFHSTVTAQKLRRFNS. A helical membrane pass occupies residues 36-56; that stretch reads LILLLRLASFSFSLASAVFML. The Extracellular portion of the chain corresponds to 57–74; sequence TNSRGSASPHWYDFDAFR. A helical transmembrane segment spans residues 75–95; the sequence is FVFVANAIVALYSVFEMGTCV. The Cytoplasmic portion of the chain corresponds to 96 to 114; the sequence is WEFSRETTLWPEAFQVWFD. Residues 115 to 135 form a helical membrane-spanning segment; sequence FGHDQVFSYLLLSAGSAAAAL. The Extracellular segment spans residues 136 to 157; the sequence is ARTMRGGDTCTANKAFCLQSDV. Residues 158–178 traverse the membrane as a helical segment; sequence AIGLGFAAFLFLAFSSCFSGF. At 179-194 the chain is on the cytoplasmic side; it reads RVACFLITGSRFHLYS.

It belongs to the Casparian strip membrane proteins (CASP) family. In terms of assembly, homodimer and heterodimers.

The protein localises to the cell membrane. This is CASP-like protein 4C1 from Arabidopsis thaliana (Mouse-ear cress).